A 1410-amino-acid polypeptide reads, in one-letter code: DNA-directed RNA polymerase subunit beta' (1410 aa).

The Zn(2+) site is built by Cys70, Cys72, Cys85, and Cys88. 3 residues coordinate Mg(2+): Asp460, Asp462, and Asp464. Positions 814, 888, 895, and 898 each coordinate Zn(2+).

The protein belongs to the RNA polymerase beta' chain family. As to quaternary structure, the RNAP catalytic core consists of 2 alpha, 1 beta, 1 beta' and 1 omega subunit. When a sigma factor is associated with the core the holoenzyme is formed, which can initiate transcription. Requires Mg(2+) as cofactor. Zn(2+) is required as a cofactor.

It carries out the reaction RNA(n) + a ribonucleoside 5'-triphosphate = RNA(n+1) + diphosphate. Its function is as follows. DNA-dependent RNA polymerase catalyzes the transcription of DNA into RNA using the four ribonucleoside triphosphates as substrates. The protein is DNA-directed RNA polymerase subunit beta' of Shewanella denitrificans (strain OS217 / ATCC BAA-1090 / DSM 15013).